Consider the following 549-residue polypeptide: Cytochrome c oxidase subunit 1 homolog, bacteroid (549 aa).

Helical transmembrane passes span 12–32 (IGESGLAVVFAATAFLCVIAA), 39–59 (PFAFHAALSAAASVAAVFCIV), and 87–107 (FSSFMAMFWGIAGFLVGLIIA). A heme b-binding site is contributed by His131. Transmembrane regions (helical) follow at residues 132–152 (TSAVIFAFGGNVLIATSFYVV), 168–188 (FVVVGYNFFILVAGTGYLLGV), 201–221 (ADLWLTIVWVVYLLVFLATII), 228–248 (IFVANWFYLAFIVTIAVLHLG), 279–299 (GHNAVGFFLTAGFLAIMYYFI), 312–332 (LSIIHFWALIFLYIWAGPHHL), 344–364 (LGMTFSIMLWMPSWGGMINGL), and 382–402 (MLVVSVAFYGMSTFEGPMMSI). His280, His330, and His331 together coordinate Cu cation. Residues His418 and His420 each contribute to the heme b site. The next 3 membrane-spanning stretches (helical) occupy residues 423 to 443 (ALGWVGFVSFGALYCLVPWAW), 458 to 478 (FWVATLGIVLYISAMWVSGIL), and 512 to 532 (AGGGLFLIGALIMAYNLWMTV).

It belongs to the heme-copper respiratory oxidase family. Cu(2+) is required as a cofactor. The cofactor is heme b.

It is found in the cell membrane. It catalyses the reaction 4 Fe(II)-[cytochrome c] + O2 + 8 H(+)(in) = 4 Fe(III)-[cytochrome c] + 2 H2O + 4 H(+)(out). It functions in the pathway energy metabolism; oxidative phosphorylation. In terms of biological role, cytochrome c oxidase is the component of the respiratory chain that catalyzes the reduction of oxygen to water. Subunits 1-3 form the functional core of the enzyme complex. Co I is the catalytic subunit of the enzyme. Electrons originating in cytochrome c or a quinol are transferred to the bimetallic center formed by a high-spin heme and copper B. The chain is Cytochrome c oxidase subunit 1 homolog, bacteroid (fixN) from Bradyrhizobium diazoefficiens (strain JCM 10833 / BCRC 13528 / IAM 13628 / NBRC 14792 / USDA 110).